The following is a 119-amino-acid chain: Small ribosomal subunit protein uS13m (119 aa).

Belongs to the universal ribosomal protein uS13 family. Component of the mitochondrial small ribosomal subunit (mt-SSU). Mature N.crassa 74S mitochondrial ribosomes consist of a small (37S) and a large (54S) subunit. The 37S small subunit contains a 16S ribosomal RNA (16S mt-rRNA) and 32 different proteins. The 54S large subunit contains a 23S rRNA (23S mt-rRNA) and 42 different proteins.

The protein localises to the mitochondrion. Functionally, component of the mitochondrial ribosome (mitoribosome), a dedicated translation machinery responsible for the synthesis of mitochondrial genome-encoded proteins, including at least some of the essential transmembrane subunits of the mitochondrial respiratory chain. The mitoribosomes are attached to the mitochondrial inner membrane and translation products are cotranslationally integrated into the membrane. The polypeptide is Small ribosomal subunit protein uS13m (sws2) (Neurospora crassa (strain ATCC 24698 / 74-OR23-1A / CBS 708.71 / DSM 1257 / FGSC 987)).